A 253-amino-acid polypeptide reads, in one-letter code: Serine/threonine-protein phosphatase 3 (253 aa).

It depends on Mn(2+) as a cofactor. In terms of processing, phosphorylated by YegI.

The catalysed reaction is O-phospho-L-seryl-[protein] + H2O = L-seryl-[protein] + phosphate. The enzyme catalyses O-phospho-L-threonyl-[protein] + H2O = L-threonyl-[protein] + phosphate. Activity dramatically decreases in the presence of the general protein phosphatase inhibitor sodium phosphate. Slightly inhibited by sodium fluoride. Activity decreases in the presence of the metal chelator EDTA. PP2C-like phosphatase that can dephosphorylate YegI. In vitro, can hydrolyze p-nitrophenyl phosphate (pNPP) to p-nitrophenol. This is Serine/threonine-protein phosphatase 3 from Escherichia coli (strain K12).